The primary structure comprises 91 residues: Small ribosomal subunit protein uS19 (91 aa).

This sequence belongs to the universal ribosomal protein uS19 family.

Its function is as follows. Protein S19 forms a complex with S13 that binds strongly to the 16S ribosomal RNA. This Cupriavidus necator (strain ATCC 17699 / DSM 428 / KCTC 22496 / NCIMB 10442 / H16 / Stanier 337) (Ralstonia eutropha) protein is Small ribosomal subunit protein uS19.